Here is an 81-residue protein sequence, read N- to C-terminus: Large ribosomal subunit protein bL31B (81 aa).

It belongs to the bacterial ribosomal protein bL31 family. Type B subfamily. In terms of assembly, part of the 50S ribosomal subunit.

This chain is Large ribosomal subunit protein bL31B, found in Bacillus anthracis (strain A0248).